A 216-amino-acid chain; its full sequence is Adenylate kinase (216 aa).

ATP is bound at residue 10 to 15; the sequence is GAGKGT. Residues 30 to 59 are NMP; the sequence is STGDMIRETIKSDSEIGKELKKVLDAGQLV. AMP is bound by residues T31, R36, 57–59, and Q92; that span reads QLV. The segment at 122-159 is LID; it reads GRRVHPASGRTYHTKFNPPKVEGKDDITGEDLITRTDD. ATP is bound by residues R123 and 132-133; that span reads TY. Positions 156 and 167 each coordinate AMP. Q202 is an ATP binding site.

This sequence belongs to the adenylate kinase family. Monomer.

The protein resides in the cytoplasm. It catalyses the reaction AMP + ATP = 2 ADP. It participates in purine metabolism; AMP biosynthesis via salvage pathway; AMP from ADP: step 1/1. Functionally, catalyzes the reversible transfer of the terminal phosphate group between ATP and AMP. Plays an important role in cellular energy homeostasis and in adenine nucleotide metabolism. The sequence is that of Adenylate kinase from Francisella philomiragia subsp. philomiragia (strain ATCC 25017 / CCUG 19701 / FSC 153 / O#319-036).